The sequence spans 1164 residues: DNA-directed RNA polymerase 132 kDa polypeptide (1164 aa).

This sequence belongs to the RNA polymerase beta chain family. In terms of assembly, the DNA-dependent RNA polymerase used for intermediate and late genes expression consists of eight subunits (147) kDa, (133) kDa, (35) kDa, (30) kDa, (22) kDa, (19) kDa, (18) kDa and (7) kDa totalling more than 500 kDa in mass. The same holoenzyme, with the addition of the transcription-specificity factor RAP94, is used for early gene expression.

The protein localises to the virion. It catalyses the reaction RNA(n) + a ribonucleoside 5'-triphosphate = RNA(n+1) + diphosphate. In terms of biological role, part of the DNA-dependent RNA polymerase which catalyzes the transcription of viral DNA into RNA using the four ribonucleoside triphosphates as substrates. Responsible for the transcription of early, intermediate and late genes. DNA-dependent RNA polymerase associates with the early transcription factor (ETF), itself composed of D6 and A7, thereby allowing the early genes transcription. Late transcription, and probably also intermediate transcription, require newly synthesized RNA polymerase. The sequence is that of DNA-directed RNA polymerase 132 kDa polypeptide (RPO132) from Cowpox virus (strain GRI-90 / Grishak) (CPV).